Here is a 363-residue protein sequence, read N- to C-terminus: Probable dual-specificity RNA methyltransferase RlmN (363 aa).

E99 serves as the catalytic Proton acceptor. In terms of domain architecture, Radical SAM core spans 105–341 (SENRMTACVS…VTVRKSHGAS (237 aa)). An intrachain disulfide couples C112 to C346. [4Fe-4S] cluster-binding residues include C119, C123, and C126. S-adenosyl-L-methionine-binding positions include 171 to 172 (GE), S204, 227 to 229 (SLH), and N303. C346 functions as the S-methylcysteine intermediate in the catalytic mechanism.

Belongs to the radical SAM superfamily. RlmN family. Requires [4Fe-4S] cluster as cofactor.

It localises to the cytoplasm. The enzyme catalyses adenosine(2503) in 23S rRNA + 2 reduced [2Fe-2S]-[ferredoxin] + 2 S-adenosyl-L-methionine = 2-methyladenosine(2503) in 23S rRNA + 5'-deoxyadenosine + L-methionine + 2 oxidized [2Fe-2S]-[ferredoxin] + S-adenosyl-L-homocysteine. The catalysed reaction is adenosine(37) in tRNA + 2 reduced [2Fe-2S]-[ferredoxin] + 2 S-adenosyl-L-methionine = 2-methyladenosine(37) in tRNA + 5'-deoxyadenosine + L-methionine + 2 oxidized [2Fe-2S]-[ferredoxin] + S-adenosyl-L-homocysteine. Specifically methylates position 2 of adenine 2503 in 23S rRNA and position 2 of adenine 37 in tRNAs. In Chlorobium phaeobacteroides (strain DSM 266 / SMG 266 / 2430), this protein is Probable dual-specificity RNA methyltransferase RlmN.